Consider the following 265-residue polypeptide: tRNA (guanine-N(7)-)-methyltransferase (265 aa).

S-adenosyl-L-methionine contacts are provided by glutamate 96, glutamate 121, aspartate 148, and aspartate 170. Aspartate 170 is an active-site residue. Lysine 174 and aspartate 206 together coordinate substrate.

The protein belongs to the class I-like SAM-binding methyltransferase superfamily. TrmB family.

It carries out the reaction guanosine(46) in tRNA + S-adenosyl-L-methionine = N(7)-methylguanosine(46) in tRNA + S-adenosyl-L-homocysteine. It participates in tRNA modification; N(7)-methylguanine-tRNA biosynthesis. In terms of biological role, catalyzes the formation of N(7)-methylguanine at position 46 (m7G46) in tRNA. This Rhodopseudomonas palustris (strain ATCC BAA-98 / CGA009) protein is tRNA (guanine-N(7)-)-methyltransferase.